A 201-amino-acid polypeptide reads, in one-letter code: Transgelin (201 aa).

The residue at position 2 (alanine 2) is an N-acetylalanine. The 114-residue stretch at 24-137 (EELEERLVEW…RTLMALGSLA (114 aa)) folds into the Calponin-homology (CH) domain. Serine 166 is subject to Phosphoserine. The residue at position 172 (lysine 172) is an N6-acetyllysine. The Calponin-like repeat unit spans residues 175-200 (IGLQMGSNRGASQAGMTGYGRPRQII). At serine 181 the chain carries Phosphoserine. Position 183 is an omega-N-methylarginine (arginine 183).

This sequence belongs to the calponin family.

The protein localises to the cytoplasm. Its function is as follows. Actin cross-linking/gelling protein. Involved in calcium interactions and contractile properties of the cell that may contribute to replicative senescence. This chain is Transgelin (TAGLN), found in Homo sapiens (Human).